The sequence spans 176 residues: Large ribosomal subunit protein uL6 (176 aa).

This sequence belongs to the universal ribosomal protein uL6 family. Part of the 50S ribosomal subunit.

Functionally, this protein binds to the 23S rRNA, and is important in its secondary structure. It is located near the subunit interface in the base of the L7/L12 stalk, and near the tRNA binding site of the peptidyltransferase center. The sequence is that of Large ribosomal subunit protein uL6 from Shewanella sediminis (strain HAW-EB3).